The sequence spans 230 residues: NAD(P)H-hydrate epimerase (230 aa).

In terms of domain architecture, YjeF N-terminal spans 11–223; it reads YAAADIRAAE…DVGLDLSGAT (213 aa). 59–63 serves as a coordination point for (6S)-NADPHX; it reads NNGGD. K(+) contacts are provided by Asn-60 and Asp-125. Residues 129–137 and Asp-165 each bind (6S)-NADPHX; that span reads GIGTTDSPA. A K(+)-binding site is contributed by Ser-168.

Belongs to the NnrE/AIBP family. K(+) is required as a cofactor.

It carries out the reaction (6R)-NADHX = (6S)-NADHX. The catalysed reaction is (6R)-NADPHX = (6S)-NADPHX. In terms of biological role, catalyzes the epimerization of the S- and R-forms of NAD(P)HX, a damaged form of NAD(P)H that is a result of enzymatic or heat-dependent hydration. This is a prerequisite for the S-specific NAD(P)H-hydrate dehydratase to allow the repair of both epimers of NAD(P)HX. This chain is NAD(P)H-hydrate epimerase, found in Clavibacter michiganensis subsp. michiganensis (strain NCPPB 382).